The primary structure comprises 233 residues: Homeobox protein Hox-D4a (233 aa).

An Antp-type hexapeptide motif is present at residues 124–129 (VYPWMK). Residues 145 to 204 (PKRSRTAYTRQQVLELEKEFHFNRYLTRRRRIEIAHTLCLSERQIKIWFQNRRMKWTKDH) constitute a DNA-binding region (homeobox). The tract at residues 203-233 (DHKLPNTKGRSAPASSHLQSIHKDQTDITSL) is disordered. Over residues 223–233 (IHKDQTDITSL) the composition is skewed to basic and acidic residues.

It belongs to the Antp homeobox family. Deformed subfamily.

The protein localises to the nucleus. Functionally, sequence-specific transcription factor which is part of a developmental regulatory system that provides cells with specific positional identities on the anterior-posterior axis. This Takifugu rubripes (Japanese pufferfish) protein is Homeobox protein Hox-D4a (hoxd4a).